The chain runs to 309 residues: Taste receptor type 2 member 20 (309 aa).

The Extracellular portion of the chain corresponds to 1-6 (MMSFLH). The helical transmembrane segment at 7-27 (IVFSILVVVAFILGNFANGFI) threads the bilayer. Residues 28 to 46 (ALINFIAWVKRQKISSADQ) are Cytoplasmic-facing. The chain crosses the membrane as a helical span at residues 47 to 67 (IIAALAVSRVGLLWVILLHWY). Topologically, residues 68–79 (STVLNPTSSNLK) are extracellular. The chain crosses the membrane as a helical span at residues 80 to 100 (VTIFISNAWAVTNHFSIWLAA). The Cytoplasmic segment spans residues 101-125 (SLSIFYLLKIVNFSRLIFHHLKRKA). A helical membrane pass occupies residues 126 to 146 (KSVVLVIVLGSLFFLVCHLVM). Over 147–178 (KSTYINVWTEEYEGNVTWKIKLRNAMHLSNLT) the chain is Extracellular. N-linked (GlcNAc...) asparagine glycans are attached at residues asparagine 161 and asparagine 176. The helical transmembrane segment at 179–199 (VAMLANLIPFTLTLISFLLLI) threads the bilayer. Topologically, residues 200–229 (YSLCKHLKKMQLHGKGSQDPSTKIHIKALQ) are cytoplasmic. Residues 230 to 250 (TVTSFLILLAIYFLCLITSFW) traverse the membrane as a helical segment. Over 251-259 (NSKMRPKEI) the chain is Extracellular. Residues 260 to 280 (VLMLCQAFGIIYPSFHSFILI) traverse the membrane as a helical segment. Topologically, residues 281 to 309 (WGNKTLKQTFLSVLWRVTCWAKGQNQSTP) are cytoplasmic.

The protein belongs to the G-protein coupled receptor T2R family.

It is found in the membrane. Receptor that may play a role in the perception of bitterness and is gustducin-linked. May play a role in sensing the chemical composition of the gastrointestinal content. The activity of this receptor may stimulate alpha gustducin, mediate PLC-beta-2 activation and lead to the gating of TRPM5. This Gorilla gorilla gorilla (Western lowland gorilla) protein is Taste receptor type 2 member 20 (TAS2R20).